Consider the following 465-residue polypeptide: Glutamate--tRNA ligase 1 (465 aa).

The short motif at 8-18 is the 'HIGH' region element; the sequence is PSPTGNLHIGG. The 'KMSKS' region signature appears at 236 to 240; it reads KLSKR. K239 contributes to the ATP binding site.

The protein belongs to the class-I aminoacyl-tRNA synthetase family. Glutamate--tRNA ligase type 1 subfamily. As to quaternary structure, monomer.

The protein localises to the cytoplasm. It carries out the reaction tRNA(Glu) + L-glutamate + ATP = L-glutamyl-tRNA(Glu) + AMP + diphosphate. Its function is as follows. Catalyzes the attachment of glutamate to tRNA(Glu) in a two-step reaction: glutamate is first activated by ATP to form Glu-AMP and then transferred to the acceptor end of tRNA(Glu). This is Glutamate--tRNA ligase 1 from Wolinella succinogenes (strain ATCC 29543 / DSM 1740 / CCUG 13145 / JCM 31913 / LMG 7466 / NCTC 11488 / FDC 602W) (Vibrio succinogenes).